A 334-amino-acid chain; its full sequence is Glycerol-3-phosphate dehydrogenase [NAD(P)+] (334 aa).

The NADPH site is built by serine 14, tyrosine 15, histidine 35, and lysine 109. Lysine 109, glycine 138, and threonine 140 together coordinate sn-glycerol 3-phosphate. Alanine 142 contributes to the NADPH binding site. Sn-glycerol 3-phosphate-binding residues include lysine 194, aspartate 247, serine 257, arginine 258, and asparagine 259. The active-site Proton acceptor is lysine 194. Arginine 258 contacts NADPH. Residues valine 282 and glutamate 284 each coordinate NADPH.

This sequence belongs to the NAD-dependent glycerol-3-phosphate dehydrogenase family.

It is found in the cytoplasm. The catalysed reaction is sn-glycerol 3-phosphate + NAD(+) = dihydroxyacetone phosphate + NADH + H(+). The enzyme catalyses sn-glycerol 3-phosphate + NADP(+) = dihydroxyacetone phosphate + NADPH + H(+). It functions in the pathway membrane lipid metabolism; glycerophospholipid metabolism. In terms of biological role, catalyzes the reduction of the glycolytic intermediate dihydroxyacetone phosphate (DHAP) to sn-glycerol 3-phosphate (G3P), the key precursor for phospholipid synthesis. The protein is Glycerol-3-phosphate dehydrogenase [NAD(P)+] of Psychromonas ingrahamii (strain DSM 17664 / CCUG 51855 / 37).